Here is a 703-residue protein sequence, read N- to C-terminus: Elongation factor G (703 aa).

Residues 9-292 (ERTRNIGIMA…AVVDYLPGPL (284 aa)) form the tr-type G domain. GTP is bound by residues 18–25 (AHIDAGKT), 91–95 (DTPGH), and 145–148 (NKMD).

Belongs to the TRAFAC class translation factor GTPase superfamily. Classic translation factor GTPase family. EF-G/EF-2 subfamily.

The protein localises to the cytoplasm. Its function is as follows. Catalyzes the GTP-dependent ribosomal translocation step during translation elongation. During this step, the ribosome changes from the pre-translocational (PRE) to the post-translocational (POST) state as the newly formed A-site-bound peptidyl-tRNA and P-site-bound deacylated tRNA move to the P and E sites, respectively. Catalyzes the coordinated movement of the two tRNA molecules, the mRNA and conformational changes in the ribosome. This chain is Elongation factor G, found in Leuconostoc mesenteroides subsp. mesenteroides (strain ATCC 8293 / DSM 20343 / BCRC 11652 / CCM 1803 / JCM 6124 / NCDO 523 / NBRC 100496 / NCIMB 8023 / NCTC 12954 / NRRL B-1118 / 37Y).